A 181-amino-acid polypeptide reads, in one-letter code: Mytilin-1 (181 aa).

The N-terminal stretch at 1 to 22 is a signal peptide; it reads MISKYCLFVIVLGTTGTALVLT.

In terms of tissue distribution, component of the organic matrix of calcified shell layers like nacre and prisms.

It localises to the secreted. This is Mytilin-1 from Mytilus galloprovincialis (Mediterranean mussel).